Reading from the N-terminus, the 142-residue chain is Interleukin-3 (142 aa).

The N-terminal stretch at 1-18 is a signal peptide; the sequence is MSHLPILLLLLLVSPGLQ. N-linked (GlcNAc...) asparagine glycosylation occurs at Asn33. A disulfide bridge links Cys34 with Cys102.

The protein belongs to the IL-3 family. Monomer. In terms of tissue distribution, activated T-cells, mast cells, natural killer cells.

It is found in the secreted. Granulocyte/macrophage colony-stimulating factors are cytokines that act in hematopoiesis by controlling the production, differentiation, and function of 2 related white cell populations of the blood, the granulocytes and the monocytes-macrophages. In terms of biological role, this CSF induces granulocytes, macrophages, mast cells, stem cells, erythroid cells, eosinophils and megakaryocytes. The polypeptide is Interleukin-3 (IL3) (Callithrix jacchus (White-tufted-ear marmoset)).